Consider the following 140-residue polypeptide: Putative ABC transporter permease protein ORF1 (140 aa).

The ABC transmembrane type-1 domain maps to 1-133 (DPNVAFYSVV…ITTAGIFAYF (133 aa)). 3 consecutive transmembrane segments (helical) span residues 9-29 (VVAV…IAAL), 65-85 (TACI…YVMT), and 115-135 (TIAS…YFVT).

It belongs to the binding-protein-dependent transport system permease family. MalFG subfamily.

The protein resides in the cell membrane. Functionally, may play a role in sugar transport. In Caldicellulosiruptor sp. (strain Rt8B.4), this protein is Putative ABC transporter permease protein ORF1.